The primary structure comprises 290 residues: ATP synthase gamma chain (290 aa).

This sequence belongs to the ATPase gamma chain family. F-type ATPases have 2 components, CF(1) - the catalytic core - and CF(0) - the membrane proton channel. CF(1) has five subunits: alpha(3), beta(3), gamma(1), delta(1), epsilon(1). CF(0) has three main subunits: a, b and c.

It is found in the cell membrane. Its function is as follows. Produces ATP from ADP in the presence of a proton gradient across the membrane. The gamma chain is believed to be important in regulating ATPase activity and the flow of protons through the CF(0) complex. In Heliobacterium modesticaldum (strain ATCC 51547 / Ice1), this protein is ATP synthase gamma chain.